Here is a 513-residue protein sequence, read N- to C-terminus: Serine/threonine-protein kinase ppk8 (513 aa).

The segment covering 98–114 has biased composition (low complexity); sequence LSSTLTSMSEESSSTES. The segment at 98–120 is disordered; that stretch reads LSSTLTSMSEESSSTESKFATLN. The region spanning 241–505 is the Protein kinase domain; the sequence is GKLNNVIGEG…ISGARSTTWM (265 aa). Residues 247–255 and Lys270 contribute to the ATP site; that span reads IGEGASSFI. Asp364 (proton acceptor) is an active-site residue.

Belongs to the protein kinase superfamily. Ser/Thr protein kinase family.

It is found in the cytoplasm. The protein resides in the nucleus. It catalyses the reaction L-seryl-[protein] + ATP = O-phospho-L-seryl-[protein] + ADP + H(+). The catalysed reaction is L-threonyl-[protein] + ATP = O-phospho-L-threonyl-[protein] + ADP + H(+). The chain is Serine/threonine-protein kinase ppk8 (ppk8) from Schizosaccharomyces pombe (strain 972 / ATCC 24843) (Fission yeast).